Reading from the N-terminus, the 193-residue chain is MYQDLIRNELNEAAETLANFLQDEANIHAIQRAAVLLADSFKAGGKVLSCGNGGSHCDAMHFAEELTGRYRENRPGYPAIAISDVSHLSCVSNDFGYEYVFSRYVESVGRAGDVLLGISTSGNSGNVIKAIEAARAQGMKVITLTGKDGGKMAGSADVEIRVPHFGYADRIQEIHIKVIHILIMLIEKEMAKG.

Residues 37–193 (LADSFKAGGK…MLIEKEMAKG (157 aa)) form the SIS domain. 52 to 54 (NGG) contributes to the substrate binding site. H61 and E65 together coordinate Zn(2+). Substrate-binding positions include E65, 93–94 (ND), 119–121 (STS), S124, and Q172. Zn(2+)-binding residues include Q172 and H180.

The protein belongs to the SIS family. GmhA subfamily. In terms of assembly, homotetramer. It depends on Zn(2+) as a cofactor.

It localises to the cytoplasm. It carries out the reaction 2 D-sedoheptulose 7-phosphate = D-glycero-alpha-D-manno-heptose 7-phosphate + D-glycero-beta-D-manno-heptose 7-phosphate. It functions in the pathway carbohydrate biosynthesis; D-glycero-D-manno-heptose 7-phosphate biosynthesis; D-glycero-alpha-D-manno-heptose 7-phosphate and D-glycero-beta-D-manno-heptose 7-phosphate from sedoheptulose 7-phosphate: step 1/1. In terms of biological role, catalyzes the isomerization of sedoheptulose 7-phosphate in D-glycero-D-manno-heptose 7-phosphate. The polypeptide is Phosphoheptose isomerase (Klebsiella pneumoniae subsp. pneumoniae (strain ATCC 700721 / MGH 78578)).